Here is a 127-residue protein sequence, read N- to C-terminus: Protein ApaG (127 aa).

The ApaG domain occupies 3–127 (NNPSSKIEVA…FVLSVPRTLH (125 aa)).

This chain is Protein ApaG, found in Xylella fastidiosa (strain M23).